The primary structure comprises 163 residues: Nucleotide-binding protein all4662 (163 aa).

Belongs to the YajQ family.

Its function is as follows. Nucleotide-binding protein. In Nostoc sp. (strain PCC 7120 / SAG 25.82 / UTEX 2576), this protein is Nucleotide-binding protein all4662.